A 319-amino-acid chain; its full sequence is MTSIAFWNAFTVNPFPAAARRSPPPLTPFTSGALSPARKPRILEISHPRTLPSFRVQAIAEDEWESEKKALKGVVGSVALAEDETTGADLVVSDLKKKLIDQLFGTDRGLKATSETRAEVNELITQLEAKNPNPAPTEALSLLNGRWILAYTSFAGLFPLLGAESLQQLLKVDEISQTIDSEGFTVQNSVRFVGPFSSTSVTTNAKFEVRSPKRVQIKFEEGIIGTPQLTDSIVIPDKFEFFGQNIDLSPFKGVISSLQDTASSVAKTISSQPPIKFPISNSNAQSWLLTTYLDDELRISRADGGSVFVLIKEGSPLLT.

The transit peptide at 1–55 (MTSIAFWNAFTVNPFPAAARRSPPPLTPFTSGALSPARKPRILEISHPRTLPSFR) directs the protein to the chromoplast.

The protein belongs to the PAP/fibrillin family. In terms of tissue distribution, expressed in flower buds and floral lip tissues. Not detected in roots and leaves. Specifically expressed in conical papillate cells of adaxial epidermis of lip tissues.

It is found in the plastid. It localises to the chromoplast. Its function is as follows. May be involved in carotenoid sequestration within chromoplasts. This Oncidium hybrid cultivar (Orchid) protein is Chromoplast-specific carotenoid-associated protein C1, chromoplastic (CHRC1).